Here is a 307-residue protein sequence, read N- to C-terminus: Dihydroorotate dehydrogenase B (NAD(+)), catalytic subunit (307 aa).

FMN-binding positions include S22 and 46 to 47 (KA). Substrate-binding positions include K46 and 70–74 (NAIGL). Positions 102 and 130 each coordinate FMN. N130 contacts substrate. Catalysis depends on C133, which acts as the Nucleophile. Residues K168 and I194 each coordinate FMN. Residue 195–196 (NT) participates in substrate binding. Residues G220, 246-247 (GG), and 268-269 (GT) contribute to the FMN site.

It belongs to the dihydroorotate dehydrogenase family. Type 1 subfamily. Heterotetramer of 2 PyrK and 2 PyrD type B subunits. The cofactor is FMN.

Its subcellular location is the cytoplasm. It carries out the reaction (S)-dihydroorotate + NAD(+) = orotate + NADH + H(+). It participates in pyrimidine metabolism; UMP biosynthesis via de novo pathway; orotate from (S)-dihydroorotate (NAD(+) route): step 1/1. Its function is as follows. Catalyzes the conversion of dihydroorotate to orotate with NAD(+) as electron acceptor. The protein is Dihydroorotate dehydrogenase B (NAD(+)), catalytic subunit (pyrD) of Latilactobacillus sakei subsp. sakei (strain 23K) (Lactobacillus sakei subsp. sakei).